The following is a 101-amino-acid chain: Small ribosomal subunit protein uS14c (101 aa).

Belongs to the universal ribosomal protein uS14 family. Part of the 30S ribosomal subunit.

It is found in the plastid. Binds 16S rRNA, required for the assembly of 30S particles. The chain is Small ribosomal subunit protein uS14c from Helicosporidium sp. subsp. Simulium jonesii (Green alga).